The following is a 913-amino-acid chain: Protein translocase subunit SecA (913 aa).

ATP is bound by residues glutamine 87, 105-109 (GEGKT), and aspartate 517. Disordered regions lie at residues 568–588 (ESRR…DPGS) and 871–913 (EVAV…GKLS). Positions 897, 899, 908, and 909 each coordinate Zn(2+). A compositionally biased stretch (basic residues) spans 903–913 (KKYKQCHGKLS).

Belongs to the SecA family. Monomer and homodimer. Part of the essential Sec protein translocation apparatus which comprises SecA, SecYEG and auxiliary proteins SecDF-YajC and YidC. Zn(2+) is required as a cofactor.

The protein resides in the cell inner membrane. It localises to the cytoplasm. The enzyme catalyses ATP + H2O + cellular proteinSide 1 = ADP + phosphate + cellular proteinSide 2.. In terms of biological role, part of the Sec protein translocase complex. Interacts with the SecYEG preprotein conducting channel. Has a central role in coupling the hydrolysis of ATP to the transfer of proteins into and across the cell membrane, serving both as a receptor for the preprotein-SecB complex and as an ATP-driven molecular motor driving the stepwise translocation of polypeptide chains across the membrane. The polypeptide is Protein translocase subunit SecA (Coxiella burnetii (strain RSA 493 / Nine Mile phase I)).